We begin with the raw amino-acid sequence, 338 residues long: Lipoate-protein ligase A (338 aa).

Positions 29–216 (PATQRVLFLW…AFFAHYGERV (188 aa)) constitute a BPL/LPL catalytic domain. Residues Arg71, 76 to 79 (GAVF), and Lys134 contribute to the ATP site. Residue Lys134 coordinates (R)-lipoate.

It belongs to the LplA family. As to quaternary structure, monomer.

The protein resides in the cytoplasm. It carries out the reaction L-lysyl-[lipoyl-carrier protein] + (R)-lipoate + ATP = N(6)-[(R)-lipoyl]-L-lysyl-[lipoyl-carrier protein] + AMP + diphosphate + H(+). It participates in protein modification; protein lipoylation via exogenous pathway; protein N(6)-(lipoyl)lysine from lipoate: step 1/2. It functions in the pathway protein modification; protein lipoylation via exogenous pathway; protein N(6)-(lipoyl)lysine from lipoate: step 2/2. Its function is as follows. Catalyzes both the ATP-dependent activation of exogenously supplied lipoate to lipoyl-AMP and the transfer of the activated lipoyl onto the lipoyl domains of lipoate-dependent enzymes. The sequence is that of Lipoate-protein ligase A from Escherichia coli O8 (strain IAI1).